Here is a 487-residue protein sequence, read N- to C-terminus: Chromosomal replication initiator protein DnaA (487 aa).

Positions 1–92 (MTIKGGVVSQ…SELWTANDAT (92 aa)) are domain I, interacts with DnaA modulators. Residues 92 to 144 (TGRRLDLKSRLEFESVGGAGYEAKAEPIEIVLPVSSDVPALAPTNGSKPSPVQ) are domain II. Positions 145 to 367 (GLQERFTFDT…GALNTLSARA (223 aa)) are domain III, AAA+ region. 4 residues coordinate ATP: G189, G191, K192, and T193. Residues 368 to 487 (GEGVSRLTLE…LETITRKLRG (120 aa)) are domain IV, binds dsDNA.

It belongs to the DnaA family. In terms of assembly, oligomerizes as a right-handed, spiral filament on DNA at oriC.

It is found in the cytoplasm. Plays an essential role in the initiation and regulation of chromosomal replication. ATP-DnaA binds to the origin of replication (oriC) to initiate formation of the DNA replication initiation complex once per cell cycle. Binds the DnaA box (a 9 base pair repeat at the origin) and separates the double-stranded (ds)DNA. Forms a right-handed helical filament on oriC DNA; dsDNA binds to the exterior of the filament while single-stranded (ss)DNA is stabiized in the filament's interior. The ATP-DnaA-oriC complex binds and stabilizes one strand of the AT-rich DNA unwinding element (DUE), permitting loading of DNA polymerase. After initiation quickly degrades to an ADP-DnaA complex that is not apt for DNA replication. Binds acidic phospholipids. The chain is Chromosomal replication initiator protein DnaA from Caulobacter sp. (strain K31).